We begin with the raw amino-acid sequence, 472 residues long: Forkhead box protein H1 (472 aa).

Residues 36 to 56 form a disordered region; the sequence is SSKRSCHRSSNPLLELGGRLD. The fork-head DNA-binding region spans 97 to 193; sequence KPPYSYLAMI…LKRQNTAVSR (97 aa). Disordered regions lie at residues 211 to 246 and 261 to 360; these read YSQP…RPKL and PASS…LPTS. Pro residues predominate over residues 219-239; it reads PLPPESSLPPVPTRQSPPPSE. The span at 294 to 310 shows a compositional bias: low complexity; sequence ASYNGSSSASSVSPASD. The interval 339 to 465 is SMAD-interaction domain (SID); that stretch reads SCPPPNKSSK…PNQYALQNGP (127 aa). The short motif at 357-361 is the Fast/FoxH1 motif 1 (FM1) element; sequence LPTSY. The Fast/FoxH1 motif 2 (FM2) signature appears at 367–373; sequence PNAVAPP. The SMAD interaction motif (SIM) signature appears at 428–448; sequence LDSMLQSVPPNKSVFDALGSN.

Its subcellular location is the nucleus. Its function is as follows. Transcriptional activator. Activates an activin response element (ARE). Recognizes and binds to the DNA sequence 5'-TGT[GT][GT]ATT-3'. Modulator of nodal signaling required for organizer formation. Also required for the development of dorsal axial structures and left-right symmetry. The polypeptide is Forkhead box protein H1 (foxh1) (Danio rerio (Zebrafish)).